The chain runs to 364 residues: Biotin synthase (364 aa).

The Radical SAM core domain maps to 68–303 (CCGNTVDLCS…QQILRYAGGR (236 aa)). Positions 86, 90, and 93 each coordinate [4Fe-4S] cluster. Residues Cys131, Cys168, Cys228, and Arg298 each coordinate [2Fe-2S] cluster.

Belongs to the radical SAM superfamily. Biotin synthase family. Homodimer. [4Fe-4S] cluster serves as cofactor. It depends on [2Fe-2S] cluster as a cofactor.

It carries out the reaction (4R,5S)-dethiobiotin + (sulfur carrier)-SH + 2 reduced [2Fe-2S]-[ferredoxin] + 2 S-adenosyl-L-methionine = (sulfur carrier)-H + biotin + 2 5'-deoxyadenosine + 2 L-methionine + 2 oxidized [2Fe-2S]-[ferredoxin]. Its pathway is cofactor biosynthesis; biotin biosynthesis; biotin from 7,8-diaminononanoate: step 2/2. Functionally, catalyzes the conversion of dethiobiotin (DTB) to biotin by the insertion of a sulfur atom into dethiobiotin via a radical-based mechanism. The chain is Biotin synthase from Microcystis aeruginosa (strain NIES-843 / IAM M-2473).